The primary structure comprises 281 residues: Fructose-bisphosphate aldolase class 1 (281 aa).

K191 acts as the Schiff-base intermediate with dihydroxyacetone-P in catalysis.

It belongs to the DeoC/FbaB aldolase family. In terms of assembly, homooctamer.

The protein localises to the cytoplasm. Its subcellular location is the chromosome. The catalysed reaction is beta-D-fructose 1,6-bisphosphate = D-glyceraldehyde 3-phosphate + dihydroxyacetone phosphate. Activated by citrate. The chain is Fructose-bisphosphate aldolase class 1 (fba) from Thermococcus kodakarensis (strain ATCC BAA-918 / JCM 12380 / KOD1) (Pyrococcus kodakaraensis (strain KOD1)).